The primary structure comprises 216 residues: Phosphorylated carbohydrates phosphatase TM_1254 (216 aa).

The Nucleophile role is filled by D7.

The protein belongs to the HAD-like hydrolase superfamily. Co(2+) is required as a cofactor. Requires Mg(2+) as cofactor. The cofactor is Mn(2+). Ni(2+) serves as cofactor.

In terms of biological role, displays high phosphatase activity toward erythrose 4-phosphate, fructose 6-phosphate, 2-deoxyglucose 6-phosphate, and mannose 6-phosphate. May have a role in the intracellular metabolism of many phosphorylated carbohydrates. This is Phosphorylated carbohydrates phosphatase TM_1254 from Thermotoga maritima (strain ATCC 43589 / DSM 3109 / JCM 10099 / NBRC 100826 / MSB8).